We begin with the raw amino-acid sequence, 494 residues long: Alpha-amylase-related protein (494 aa).

The N-terminal stretch at 1–20 (MFKFTFALALCVLAAGLVLA) is a signal peptide. Gln-21 carries the post-translational modification Pyrrolidone carboxylic acid. Residues Cys-48 and Cys-104 are joined by a disulfide bond. Residues Asn-118, Gln-169, and Asp-178 each contribute to the Ca(2+) site. Cys-157 and Cys-171 are disulfide-bonded. Residue Arg-206 participates in chloride binding. The active-site Nucleophile is the Asp-208. His-212 is a Ca(2+) binding site. Residue Glu-245 is the Proton donor of the active site. Residues Asn-308 and Arg-343 each contribute to the chloride site. Cystine bridges form between Cys-376/Cys-382, Cys-418/Cys-441, and Cys-448/Cys-460.

Belongs to the glycosyl hydrolase 13 family. As to quaternary structure, monomer. Ca(2+) serves as cofactor. The cofactor is chloride.

The protein resides in the secreted. It carries out the reaction Endohydrolysis of (1-&gt;4)-alpha-D-glucosidic linkages in polysaccharides containing three or more (1-&gt;4)-alpha-linked D-glucose units.. In Drosophila pseudoobscura pseudoobscura (Fruit fly), this protein is Alpha-amylase-related protein (Amyrel).